Here is a 205-residue protein sequence, read N- to C-terminus: Regulator of G-protein signaling 4 (205 aa).

S-palmitoyl cysteine attachment occurs at residues Cys2, Cys12, and Cys95. The RGS domain occupies 62–178 (SLENLISHEC…LKSRFYLDLV (117 aa)).

In terms of processing, palmitoylated on Cys-2 and/or Cys-12. Post-translationally, phosphorylated by cyclic GMP-dependent protein kinase. As to expression, expressed in brain and heart. Expressed in brain at protein level. Expressed in prefontal and visual cortex. Isoform 4 and isoform 5 are expressed ubiquitously. Isoform 1, isoform 2 and isoform 3 are not expressed in the cerebellum.

In terms of biological role, inhibits signal transduction by increasing the GTPase activity of G protein alpha subunits thereby driving them into their inactive GDP-bound form. Activity on G(z)-alpha is inhibited by phosphorylation of the G-protein. Activity on G(z)-alpha and G(i)-alpha-1 is inhibited by palmitoylation of the G-protein. In Homo sapiens (Human), this protein is Regulator of G-protein signaling 4 (RGS4).